The following is a 479-amino-acid chain: MDFSRNLYDIGEQLDSEDLASLKFLSLDYIPQRKQEPIKDALMLFQRLQEKRMLEESNLSFLKELLFRINRLDLLITYLNTRKEEMERELQTPGRAQISAYRVMLYQISEEVSRSELRSFKFLLQEEISKCKLDDDMNLLDIFIEMEKRVILGEGKLDILKRVCAQINKSLLKIINDYEEFSKERSSSLEGSPDEFSNGEELCGVMTISDSPREQDSESQTLDKVYQMKSKPRGYCLIINNHNFAKAREKVPKLHSIRDRNGTHLDAGALTTTFEELHFEIKPHDDCTVEQIYEILKIYQLMDHSNMDCFICCILSHGDKGIIYGTDGQEAPIYELTSQFTGLKCPSLAGKPKVFFIQACQGDNYQKGIPVETDSEEQPYLEMDLSSPQTRYIPDEADFLLGMATVNNCVSYRNPAEGTWYIQSLCQSLRERCPRGDDILTILTEVNYEVSNKDDKKNMGKQMPQPTFTLRKKLVFPSD.

The propeptide occupies 1-216 (MDFSRNLYDI…TISDSPREQD (216 aa)). 2 DED domains span residues 2–80 (DFSR…TYLN) and 100–177 (AYRV…IIND). Residues Ser-188 and Ser-211 each carry the phosphoserine modification. Lys-224 is modified (N6-acetyllysine). Residue His-317 is part of the active site. Position 334 is a phosphotyrosine (Tyr-334). Residue Cys-360 is part of the active site. Residues 375–384 (SEEQPYLEMD) constitute a propeptide that is removed on maturation. Tyr-380 is modified (phosphotyrosine; by SRC). Ser-387 is modified (phosphoserine; by CDK1). The residue at position 413 (Arg-413) is a (Microbial infection) ADP-riboxanated arginine.

This sequence belongs to the peptidase C14A family. Heterotetramer that consists of two anti-parallel arranged heterodimers, each one formed by a 18 kDa (p18) and a 10 kDa (p10) subunit. Component of the death-induced signaling complex (DISC) composed of cell surface receptor FAS/CD95 or TNFRSF1A, adapter protein FADD and the CASP8 protease; recruitment of CASP8 to the complex is required for processing of CASP8 into the p18 and p10 subunits. Component of the AIM2 PANoptosome complex, a multiprotein complex that drives inflammatory cell death (PANoptosis). Interacts with CFLAR and PEA15. Interacts with TNFAIP8L2. Interacts with CASP8AP2. Interacts with RFFL and RNF34; negatively regulate CASP8 through proteasomal degradation. Interacts with NOL3; decreases CASP8 activity in a mitochondria localization- and phosphorylation-dependent manner and this interaction is dissociated by calcium. Interacts with UBR2ca. Interacts with RIPK1. Interacts with stimulated TNFRSF10B; this interaction is followed by CASP8 proteolytic cleavage and activation. Interacts (phosphorylated on Tyr-380) with PIK3R1. In terms of assembly, interacts at the endoplasmic reticulum with a complex containing BCAP31, BAP29, BCL2 and/or BCL2L1. As to quaternary structure, (Microbial infection) Interacts with human cytomegalovirus/HHV-5 protein vICA/UL36; this interaction inhibits CASP8 activation. (Microbial infection) Interacts with NleF from pathogenic E.coli. In terms of assembly, (Microbial infection) Interacts with molluscum contagiosum virus protein MC160. As to quaternary structure, (Microbial infection) Interacts (via RIP homotypic interaction motif) with herpes simplex virus 1/HHV-1 protein RIR1/ICP6 (via RIP homotypic interaction motif); this interaction prevents necroptosis activation. (Microbial infection) Interacts (via RIP homotypic interaction motif) with herpes simplex virus 2/HHV-2 protein RIR1/ICP10 (via RIP homotypic interaction motif); this interaction prevents necroptosis activation. In terms of processing, generation of the p10 and p18 subunits requires association with the death-inducing signaling complex (DISC), whereas additional processing is likely due to the autocatalytic activity of the activated protease. GZMB and CASP10 can be involved in these processing events. Post-translationally, phosphorylation on Ser-387 during mitosis by CDK1 inhibits activation by proteolysis and prevents apoptosis. Phosphorylation on Tyr-380 by SRC is mediated by interaction with the SRC SH2 domain and does not affect dimerization or recruitment to the death-inducing signaling complex (DISC) but negatively regulates DISC-mediated processing and activation of CASP8, down-regulating its proapoptotic function. Phosphorylation on Tyr-380 also enhances localization to lamellipodia in migrating cells. (Microbial infection) ADP-riboxanation by C.violaceum CopC blocks CASP8 processing, preventing CASP8 activation and ability to mediate extrinsic apoptosis. In terms of processing, (Microbial infection) Proteolytically cleaved by the cowpox virus CRMA death inhibitory protein. Isoform 1, isoform 5 and isoform 7 are expressed in a wide variety of tissues. Highest expression in peripheral blood leukocytes, spleen, thymus and liver. Barely detectable in brain, testis and skeletal muscle.

The protein localises to the cytoplasm. Its subcellular location is the nucleus. It localises to the cell projection. The protein resides in the lamellipodium. The enzyme catalyses Strict requirement for Asp at position P1 and has a preferred cleavage sequence of (Leu/Asp/Val)-Glu-Thr-Asp-|-(Gly/Ser/Ala).. CASP8 activity is restricted by RIPK1. Inhibited by the effector protein NleF that is produced by pathogenic E.coli; this inhibits apoptosis. Thiol protease that plays a key role in programmed cell death by acting as a molecular switch for apoptosis, necroptosis and pyroptosis, and is required to prevent tissue damage during embryonic development and adulthood. Initiator protease that induces extrinsic apoptosis by mediating cleavage and activation of effector caspases responsible for FAS/CD95-mediated and TNFRSF1A-induced cell death. Cleaves and activates effector caspases CASP3, CASP4, CASP6, CASP7, CASP9 and CASP10. Binding to the adapter molecule FADD recruits it to either receptor FAS/TNFRSF6 or TNFRSF1A. The resulting aggregate called the death-inducing signaling complex (DISC) performs CASP8 proteolytic activation. The active dimeric enzyme is then liberated from the DISC and free to activate downstream apoptotic proteases. Proteolytic fragments of the N-terminal propeptide (termed CAP3, CAP5 and CAP6) are likely retained in the DISC. In addition to extrinsic apoptosis, also acts as a negative regulator of necroptosis: acts by cleaving RIPK1 at 'Asp-324', which is crucial to inhibit RIPK1 kinase activity, limiting TNF-induced apoptosis, necroptosis and inflammatory response. Also able to initiate pyroptosis by mediating cleavage and activation of gasdermin-C and -D (GSDMC and GSDMD, respectively): gasdermin cleavage promotes release of the N-terminal moiety that binds to membranes and forms pores, triggering pyroptosis. Initiates pyroptosis following inactivation of MAP3K7/TAK1. Also acts as a regulator of innate immunity by mediating cleavage and inactivation of N4BP1 downstream of TLR3 or TLR4, thereby promoting cytokine production. May participate in the Granzyme B (GZMB) cell death pathways. Cleaves PARP1 and PARP2. Independent of its protease activity, promotes cell migration following phosphorylation at Tyr-380. Its function is as follows. Lacks the catalytic site and may interfere with the pro-apoptotic activity of the complex. Functionally, lacks the catalytic site and may interfere with the pro-apoptotic activity of the complex. Acts as an inhibitor of the caspase cascade. This is Caspase-8 from Homo sapiens (Human).